Consider the following 212-residue polypeptide: Pyridoxine/pyridoxamine 5'-phosphate oxidase (212 aa).

Substrate is bound by residues 8–11 and Lys66; that span reads RREY. Residues 61–66, 76–77, Arg82, Lys83, and Gln105 contribute to the FMN site; these read RIVLLK and FT. Substrate-binding residues include Tyr123, Arg127, and Ser131. FMN is bound by residues 140–141 and Trp185; that span reads QS. Residue 191-193 participates in substrate binding; that stretch reads RLH. Arg195 contacts FMN.

It belongs to the pyridoxamine 5'-phosphate oxidase family. In terms of assembly, homodimer. FMN is required as a cofactor.

The enzyme catalyses pyridoxamine 5'-phosphate + O2 + H2O = pyridoxal 5'-phosphate + H2O2 + NH4(+). It carries out the reaction pyridoxine 5'-phosphate + O2 = pyridoxal 5'-phosphate + H2O2. The protein operates within cofactor metabolism; pyridoxal 5'-phosphate salvage; pyridoxal 5'-phosphate from pyridoxamine 5'-phosphate: step 1/1. It participates in cofactor metabolism; pyridoxal 5'-phosphate salvage; pyridoxal 5'-phosphate from pyridoxine 5'-phosphate: step 1/1. Functionally, catalyzes the oxidation of either pyridoxine 5'-phosphate (PNP) or pyridoxamine 5'-phosphate (PMP) into pyridoxal 5'-phosphate (PLP). The polypeptide is Pyridoxine/pyridoxamine 5'-phosphate oxidase (Shewanella sp. (strain ANA-3)).